We begin with the raw amino-acid sequence, 379 residues long: Cytochrome b (379 aa).

4 consecutive transmembrane segments (helical) span residues 34-54 (FGSLLGICLITQILTGLLLAM), 78-99 (WLIRNLHANGASFFFICIYLHI), 114-134 (WNTGVILLLTLMATAFVGYVL), and 179-199 (FFALHFLLPFLIAGITLIHLT). H84 and H98 together coordinate heme b. Residues H183 and H197 each contribute to the heme b site. An a ubiquinone-binding site is contributed by H202. 4 helical membrane-spanning segments follow: residues 227–247 (LKDILGFTLMFIPLLILAFFS), 289–309 (LGGVLALAASVLILFLIPFLH), 321–341 (LSQVLFWFLVANLLILTWIGS), and 348–368 (FIIIGQMASFTYFLILLILFP).

This sequence belongs to the cytochrome b family. In terms of assembly, the cytochrome bc1 complex contains 11 subunits: 3 respiratory subunits (MT-CYB, CYC1 and UQCRFS1), 2 core proteins (UQCRC1 and UQCRC2) and 6 low-molecular weight proteins (UQCRH/QCR6, UQCRB/QCR7, UQCRQ/QCR8, UQCR10/QCR9, UQCR11/QCR10 and a cleavage product of UQCRFS1). This cytochrome bc1 complex then forms a dimer. Requires heme b as cofactor.

The protein localises to the mitochondrion inner membrane. Its function is as follows. Component of the ubiquinol-cytochrome c reductase complex (complex III or cytochrome b-c1 complex) that is part of the mitochondrial respiratory chain. The b-c1 complex mediates electron transfer from ubiquinol to cytochrome c. Contributes to the generation of a proton gradient across the mitochondrial membrane that is then used for ATP synthesis. This Casuarius bennetti (Dwarf cassowary) protein is Cytochrome b (MT-CYB).